The primary structure comprises 116 residues: Large ribosomal subunit protein uL18 (116 aa).

The protein belongs to the universal ribosomal protein uL18 family. In terms of assembly, part of the 50S ribosomal subunit; part of the 5S rRNA/L5/L18/L25 subcomplex. Contacts the 5S and 23S rRNAs.

Functionally, this is one of the proteins that bind and probably mediate the attachment of the 5S RNA into the large ribosomal subunit, where it forms part of the central protuberance. The polypeptide is Large ribosomal subunit protein uL18 (Cellvibrio japonicus (strain Ueda107) (Pseudomonas fluorescens subsp. cellulosa)).